The chain runs to 885 residues: Leucine--tRNA ligase (885 aa).

Residues 46–56 (PYPSGALHMGH) carry the 'HIGH' region motif. Positions 638 to 642 (KMSKS) match the 'KMSKS' region motif. Lys641 serves as a coordination point for ATP.

Belongs to the class-I aminoacyl-tRNA synthetase family.

Its subcellular location is the cytoplasm. The catalysed reaction is tRNA(Leu) + L-leucine + ATP = L-leucyl-tRNA(Leu) + AMP + diphosphate. This is Leucine--tRNA ligase from Xanthomonas campestris pv. campestris (strain B100).